The following is a 255-amino-acid chain: DASH complex subunit SPC34 (255 aa).

The interval 53 to 81 (LFSVPPPPPRQTTLTAEQQQQQKPSNRRQ) is disordered. Residues 63–81 (QTTLTAEQQQQQKPSNRRQ) are compositionally biased toward polar residues. Residues 176–248 (LAYYEAKIAE…QARLRALDAD (73 aa)) are a coiled coil.

The protein belongs to the DASH complex SPC34 family. As to quaternary structure, component of the DASH complex consisting of ASK1, DAD1, DAD2, DAD3, DAD4, DAM1, DUO1, HSK3, SPC19 and SPC34, with a stoichiometry of one copy of each subunit per complex. Multiple DASH complexes oligomerize to form a ring that encircles spindle microtubules and organizes the rod-like NDC80 complexes of the outer kinetochore of the outer kinetochore. DASH complex oligomerization strengthens microtubule attachments. On cytoplasmic microtubules, DASH complexes appear to form patches instead of rings.

The protein resides in the nucleus. The protein localises to the cytoplasm. It is found in the cytoskeleton. Its subcellular location is the spindle. It localises to the chromosome. The protein resides in the centromere. The protein localises to the kinetochore. In terms of biological role, component of the DASH complex that connects microtubules with kinetochores and couples microtubule depolymerisation to chromosome movement; it is involved in retrieving kinetochores to the spindle poles before their re-orientation on the spindle in early mitosis and allows microtubule depolymerization to pull chromosomes apart and resist detachment during anaphase. Kinetochores, consisting of a centromere-associated inner segment and a microtubule-contacting outer segment, play a crucial role in chromosome segregation by mediating the physical connection between centromeric DNA and microtubules. Kinetochores also serve as an input point for the spindle assembly checkpoint, which delays anaphase until all chromosomes have bioriented on the mitotic spindle. This is DASH complex subunit SPC34 from Chaetomium thermophilum (strain DSM 1495 / CBS 144.50 / IMI 039719) (Thermochaetoides thermophila).